We begin with the raw amino-acid sequence, 172 residues long: Large ribosomal subunit protein bL17 (172 aa).

Residues 140–160 (LKAEAKAKREEKKPAKKEEKP) show a composition bias toward basic and acidic residues. The disordered stretch occupies residues 140–172 (LKAEAKAKREEKKPAKKEEKPKKAKKEKAAASN).

Belongs to the bacterial ribosomal protein bL17 family. As to quaternary structure, part of the 50S ribosomal subunit. Contacts protein L32.

In Leptospira biflexa serovar Patoc (strain Patoc 1 / Ames), this protein is Large ribosomal subunit protein bL17.